The chain runs to 371 residues: Photosynthetic reaction center cytochrome c subunit (371 aa).

Heme-binding residues include methionine 114, cysteine 127, cysteine 130, histidine 131, methionine 153, histidine 167, cysteine 178, cysteine 181, histidine 182, methionine 267, cysteine 278, cysteine 281, histidine 282, cysteine 339, cysteine 342, and histidine 343.

As to quaternary structure, component of the photosynthetic reaction center composed of protein subunits L (PufL), M (PufM), H (PuhA) and cytochrome C (PufC). The reaction center interacts with light-harvesting antenna complex LH1. Post-translationally, binds 4 heme groups per subunit.

The protein resides in the cellular chromatophore membrane. In terms of biological role, the reaction center of purple bacteria contains a tightly bound cytochrome molecule which re-reduces the photo oxidized primary electron donor. The sequence is that of Photosynthetic reaction center cytochrome c subunit (pufC) from Roseobacter denitrificans (strain ATCC 33942 / OCh 114) (Erythrobacter sp. (strain OCh 114)).